A 266-amino-acid chain; its full sequence is Interleukin-1 beta (266 aa).

Residues 1 to 113 (MATVPEPINE…ETSSDELLCD (113 aa)) constitute a propeptide that is removed on maturation.

It belongs to the IL-1 family. In terms of assembly, monomer. In its precursor form, weakly interacts with full-length MEFV; the mature cytokine does not interact at all. Interacts with integrins ITGAV:ITGBV and ITGA5:ITGB1; integrin-binding is required for IL1B signaling. Interacts with cargo receptor TMED10; the interaction is direct and is required for the secretion of IL1B mature form. Interacts with HSP90AB1; the interaction facilitates cargo translocation into the ERGIC. Interacts with HSP90B1; the interaction facilitates cargo translocation into the ERGIC.

It is found in the cytoplasm. It localises to the cytosol. Its subcellular location is the secreted. The protein localises to the lysosome. The protein resides in the extracellular exosome. Functionally, potent pro-inflammatory cytokine. Initially discovered as the major endogenous pyrogen, induces prostaglandin synthesis, neutrophil influx and activation, T-cell activation and cytokine production, B-cell activation and antibody production, and fibroblast proliferation and collagen production. Promotes Th17 differentiation of T-cells. Synergizes with IL12/interleukin-12 to induce IFNG synthesis from T-helper 1 (Th1) cells. Plays a role in angiogenesis by inducing VEGF production synergistically with TNF and IL6. Involved in transduction of inflammation downstream of pyroptosis: its mature form is specifically released in the extracellular milieu by passing through the gasdermin-D (GSDMD) pore. The polypeptide is Interleukin-1 beta (IL1B) (Capra hircus (Goat)).